The primary structure comprises 456 residues: Probable hexose phosphate transport protein (456 aa).

Helical transmembrane passes span 34-54 (IFYSMFLGYVFFYFTRKSFTF), 70-90 (LGIIGSTLYITYGISKFVSGV), 113-133 (IFFGLSSTIPLFVLFWGINGW), 161-181 (VWSTSHNIGGALIPVLTGVAI), 185-205 (GWRGAMFIPGIICIIMGFILI), 257-277 (YVLSNKWLWFLSFASFFIYVV), 302-322 (LCVSLFEIGGLFGMLLAGWLS), 331-351 (GPMNVVFSLGLLVSILGLWGT), 363-383 (FLFIIGFFLFGPQMMIGLAAA), 394-414 (ASGFTGWFAYFGAAFAGYPLG), and 421-441 (GWHGFFVALLACALIALILFL).

This sequence belongs to the major facilitator superfamily. Organophosphate:Pi antiporter (OPA) (TC 2.A.1.4) family.

The protein localises to the cell membrane. In terms of biological role, transport protein for sugar phosphate uptake. The protein is Probable hexose phosphate transport protein of Chlamydia trachomatis serovar D (strain ATCC VR-885 / DSM 19411 / UW-3/Cx).